We begin with the raw amino-acid sequence, 1043 residues long: Isoleucine--tRNA ligase (1043 aa).

The 'HIGH' region motif lies at 49–59 (PFATGLPHYGH). A 'KMSKS' region motif is present at residues 592–596 (KMSKR). K595 is an ATP binding site.

It belongs to the class-I aminoacyl-tRNA synthetase family. IleS type 2 subfamily. In terms of assembly, monomer. The cofactor is Zn(2+).

It is found in the cytoplasm. The enzyme catalyses tRNA(Ile) + L-isoleucine + ATP = L-isoleucyl-tRNA(Ile) + AMP + diphosphate. Functionally, catalyzes the attachment of isoleucine to tRNA(Ile). As IleRS can inadvertently accommodate and process structurally similar amino acids such as valine, to avoid such errors it has two additional distinct tRNA(Ile)-dependent editing activities. One activity is designated as 'pretransfer' editing and involves the hydrolysis of activated Val-AMP. The other activity is designated 'posttransfer' editing and involves deacylation of mischarged Val-tRNA(Ile). In Chlamydia caviae (strain ATCC VR-813 / DSM 19441 / 03DC25 / GPIC) (Chlamydophila caviae), this protein is Isoleucine--tRNA ligase.